The chain runs to 282 residues: Homeobox protein vex1 (282 aa).

A DNA-binding region (homeobox) is located at residues 129–188; that stretch reads ASRARTKFTAEQLEELEKSFKENRYIGSSEKRRLSKVLKLSENQIKTWFQNRRMKFKRQT.

The protein resides in the nucleus. Transcriptional repressor. Acts in a ventral signaling pathway downstream of bmp4 to antagonize the Spemann organizer and ventrally pattern the embryonic mesoderm. Represses transcription of the dorsal genes gsc and otx2. The protein is Homeobox protein vex1 of Xenopus tropicalis (Western clawed frog).